The chain runs to 248 residues: ATP synthase subunit a, chloroplastic (248 aa).

The next 5 membrane-spanning stretches (helical) occupy residues 37–57, 96–116, 135–155, 200–220, and 221–241; these read AQVL…SIVA, VPFI…GALF, INTT…AGLH, LVVA…MMFL, and GLFT…AYIG.

Belongs to the ATPase A chain family. In terms of assembly, F-type ATPases have 2 components, CF(1) - the catalytic core - and CF(0) - the membrane proton channel. CF(1) has five subunits: alpha(3), beta(3), gamma(1), delta(1), epsilon(1). CF(0) has four main subunits: a, b, b' and c.

The protein localises to the plastid. Its subcellular location is the chloroplast thylakoid membrane. Functionally, key component of the proton channel; it plays a direct role in the translocation of protons across the membrane. This Angiopteris evecta (Mule's foot fern) protein is ATP synthase subunit a, chloroplastic.